The sequence spans 235 residues: Germin-like protein 1-4 (235 aa).

The signal sequence occupies residues 1 to 27; the sequence is MAAKLPTVVLLASFAAVILSLAAPLLA. Cys-37 and Cys-55 are oxidised to a cystine. The N-linked (GlcNAc...) asparagine glycan is linked to Asn-60. The region spanning 69–226 is the Cupin type-1 domain; the sequence is PGLGKPADVY…AFQVDGGVVE (158 aa). The Mn(2+) site is built by His-120, His-122, Glu-127, and His-171.

Belongs to the germin family. As to quaternary structure, oligomer (believed to be a pentamer but probably hexamer).

The protein resides in the secreted. It is found in the extracellular space. Its subcellular location is the apoplast. May play a role in plant defense. Probably has no oxalate oxidase activity even if the active site is conserved. In Oryza sativa subsp. japonica (Rice), this protein is Germin-like protein 1-4.